A 79-amino-acid polypeptide reads, in one-letter code: D-alanyl carrier protein (79 aa).

The Carrier domain maps to methionine 1 to cysteine 77. Serine 35 bears the O-(pantetheine 4'-phosphoryl)serine mark.

Belongs to the DltC family. Post-translationally, 4'-phosphopantetheine is transferred from CoA to a specific serine of apo-DCP.

Its subcellular location is the cytoplasm. Its pathway is cell wall biogenesis; lipoteichoic acid biosynthesis. Its function is as follows. Carrier protein involved in the D-alanylation of lipoteichoic acid (LTA). The loading of thioester-linked D-alanine onto DltC is catalyzed by D-alanine--D-alanyl carrier protein ligase DltA. The DltC-carried D-alanyl group is further transferred to cell membrane phosphatidylglycerol (PG) by forming an ester bond, probably catalyzed by DltD. D-alanylation of LTA plays an important role in modulating the properties of the cell wall in Gram-positive bacteria, influencing the net charge of the cell wall. This is D-alanyl carrier protein from Streptococcus agalactiae serotype Ia (strain ATCC 27591 / A909 / CDC SS700).